The chain runs to 443 residues: ATP-dependent protease ATPase subunit HslU (443 aa).

Residues I20, 62–67 (GVGKTE), D255, E321, and R393 each bind ATP.

The protein belongs to the ClpX chaperone family. HslU subfamily. As to quaternary structure, a double ring-shaped homohexamer of HslV is capped on each side by a ring-shaped HslU homohexamer. The assembly of the HslU/HslV complex is dependent on binding of ATP.

It is found in the cytoplasm. Its function is as follows. ATPase subunit of a proteasome-like degradation complex; this subunit has chaperone activity. The binding of ATP and its subsequent hydrolysis by HslU are essential for unfolding of protein substrates subsequently hydrolyzed by HslV. HslU recognizes the N-terminal part of its protein substrates and unfolds these before they are guided to HslV for hydrolysis. This is ATP-dependent protease ATPase subunit HslU from Helicobacter pylori (strain Shi470).